The following is a 122-amino-acid chain: Small ribosomal subunit protein uS13 (122 aa).

The tract at residues 95 to 122 is disordered; that stretch reads GLPVRGQRTHTNARTRKGPAKPIAGKKK.

Belongs to the universal ribosomal protein uS13 family. Part of the 30S ribosomal subunit. Forms a loose heterodimer with protein S19. Forms two bridges to the 50S subunit in the 70S ribosome.

Functionally, located at the top of the head of the 30S subunit, it contacts several helices of the 16S rRNA. In the 70S ribosome it contacts the 23S rRNA (bridge B1a) and protein L5 of the 50S subunit (bridge B1b), connecting the 2 subunits; these bridges are implicated in subunit movement. Contacts the tRNAs in the A and P-sites. The sequence is that of Small ribosomal subunit protein uS13 from Rhodospirillum rubrum (strain ATCC 11170 / ATH 1.1.1 / DSM 467 / LMG 4362 / NCIMB 8255 / S1).